The sequence spans 161 residues: Arachidonate 5-lipoxygenase-activating protein (161 aa).

The Lumenal segment spans residues 1-8 (MDQEAVGN). The helical transmembrane segment at 9 to 30 (VVLLAIVTLISVVQNAFFAHKV) threads the bilayer. The Cytoplasmic segment spans residues 31-52 (ELESKAQSGRSFQRTGTLAFER). The chain crosses the membrane as a helical span at residues 53-77 (VYTANQNCVDAYPTFLVVLWTAGLL). Topologically, residues 78-80 (CSQ) are lumenal. Residues 81 to 102 (VPAAFAGLMYLFVRQKYFVGYL) form a helical membrane-spanning segment. Residues 103-107 (GERTQ) lie on the Cytoplasmic side of the membrane. An intramembrane segment occupies 108–115 (STPGYIFG). The chain crosses the membrane as a helical span at residues 116–128 (KRIILFLFLMSLA). The Lumenal portion of the chain corresponds to 129 to 161 (GILNHYLIFFFGSDFENYIRTITTTISPLLLIP).

The protein belongs to the MAPEG family. In terms of assembly, homotrimer. Interacts with LTC4S and ALOX5.

Its subcellular location is the nucleus membrane. It localises to the endoplasmic reticulum membrane. In terms of biological role, required for leukotriene biosynthesis by ALOX5 (5-lipoxygenase). Anchors ALOX5 to the membrane. Binds arachidonic acid, and could play an essential role in the transfer of arachidonic acid to ALOX5. Binds to MK-886, a compound that blocks the biosynthesis of leukotrienes. The sequence is that of Arachidonate 5-lipoxygenase-activating protein (Alox5ap) from Rattus norvegicus (Rat).